The primary structure comprises 561 residues: Arginine--tRNA ligase (561 aa).

The short motif at 129–139 is the 'HIGH' region element; it reads ANPTGPLHVGH.

This sequence belongs to the class-I aminoacyl-tRNA synthetase family. In terms of assembly, monomer.

It is found in the cytoplasm. It carries out the reaction tRNA(Arg) + L-arginine + ATP = L-arginyl-tRNA(Arg) + AMP + diphosphate. The chain is Arginine--tRNA ligase from Bordetella avium (strain 197N).